We begin with the raw amino-acid sequence, 101 residues long: Small ribosomal subunit protein uS14 (101 aa).

The protein belongs to the universal ribosomal protein uS14 family. As to quaternary structure, part of the 30S ribosomal subunit. Contacts proteins S3 and S10.

Its function is as follows. Binds 16S rRNA, required for the assembly of 30S particles and may also be responsible for determining the conformation of the 16S rRNA at the A site. This Orientia tsutsugamushi (strain Boryong) (Rickettsia tsutsugamushi) protein is Small ribosomal subunit protein uS14.